Consider the following 116-residue polypeptide: Large ribosomal subunit protein eL22B (116 aa).

The protein belongs to the eukaryotic ribosomal protein eL22 family.

In Dictyostelium discoideum (Social amoeba), this protein is Large ribosomal subunit protein eL22B (rpl22a).